The sequence spans 714 residues: Choline transporter-like protein 5 (714 aa).

Residues 1-33 (MGRRSAAPTSPFGEPRKFDPKFKGPIGKRHCTD) lie on the Cytoplasmic side of the membrane. Residues 34–54 (VLCCIIFVVVILGYIALGVVA) traverse the membrane as a helical segment. At 55-237 (WIHGDPRKII…KIFEDYASSW (183 aa)) the chain is on the extracellular side. N-linked (GlcNAc...) asparagine glycans are attached at residues N83, N132, N192, and N205. The chain crosses the membrane as a helical span at residues 238–258 (YWILIALFIAMVVSLLFLILL). Over 259–261 (RFT) the chain is Cytoplasmic. The helical transmembrane segment at 262–282 (AGVFFWIFIIGVIGVVGYGIW) threads the bilayer. Residues 283–320 (HCFWEYDSLKGVPGADLTIYDIGLQTDFRVYLQLRQTW) lie on the Extracellular side of the membrane. Residues 321–341 (LAFMILLCIVEVIIILMLIFL) traverse the membrane as a helical segment. The Cytoplasmic segment spans residues 342-346 (RNRIR). Residues 347–367 (IAIALLQEGSRAIGYIMSTLF) traverse the membrane as a helical segment. Over 368-369 (YP) the chain is Extracellular. A helical membrane pass occupies residues 370–390 (IITFILIAICISYWAVTAVFM). Topologically, residues 391 to 455 (ATSGEPIYKV…QYILIFQLCN (65 aa)) are cytoplasmic. Residues 456–476 (VFVFLWLVNFSIALGQCTLAG) form a helical membrane-spanning segment. The Extracellular portion of the chain corresponds to 477 to 510 (AFASYYWAFKKPADIPACPLFSSFGRAIRYHTGS). Residues 511–531 (LALGSLILALVQFIRIILEYL) form a helical membrane-spanning segment. Over 532-605 (DHKLKASQNS…RVAVLDKVTD (74 aa)) the chain is Cytoplasmic. A helical membrane pass occupies residues 606-626 (FLLFLGKVFVTGSVGVLAFFF). The Extracellular portion of the chain corresponds to 627 to 644 (FTRKIPVLTDEAPALNYY). Residues 645 to 665 (WVPLLTVLIGSYLIAHGFFSV) traverse the membrane as a helical segment. The Cytoplasmic segment spans residues 666–711 (YAMCVDTLFLCFCEDLERNNGSSSKPYYMSPNLHRILGKKEILSKK).

The protein belongs to the CTL (choline transporter-like) family.

It is found in the cell membrane. It carries out the reaction choline(out) + n H(+)(in) = choline(in) + n H(+)(out). Choline/H+ antiporter. The chain is Choline transporter-like protein 5 (slc44a5) from Xenopus tropicalis (Western clawed frog).